A 498-amino-acid chain; its full sequence is Glutathione hydrolase 6 (498 aa).

At 1–49 the chain is on the cytoplasmic side; it reads MDATTGAVLYQKLQLWEPGMESEEEEEEEEIAEPLVLSLRRLQNTPGNK. Residues 50–70 form a helical; Signal-anchor for type II membrane protein membrane-spanning segment; sequence VGGLPGAWTRLLAGLLLLAVS. Topologically, residues 71-498 are extracellular; it reads SSLALRQLQG…PSGCCPFQGY (428 aa). 3 N-linked (GlcNAc...) asparagine glycosylation sites follow: Asn162, Asn167, and Asn376.

Belongs to the gamma-glutamyltransferase family. Heterodimer composed of the light and heavy chains. The active site is located in the light chain. Post-translationally, cleaved by autocatalysis into a large and a small subunit and the autocatalytic cleavage is essential to the functional activation of the enzyme.

It is found in the membrane. The catalysed reaction is an N-terminal (5-L-glutamyl)-[peptide] + an alpha-amino acid = 5-L-glutamyl amino acid + an N-terminal L-alpha-aminoacyl-[peptide]. The enzyme catalyses glutathione + H2O = L-cysteinylglycine + L-glutamate. It catalyses the reaction an S-substituted glutathione + H2O = an S-substituted L-cysteinylglycine + L-glutamate. It participates in sulfur metabolism; glutathione metabolism. Its function is as follows. Hydrolyzes and transfers gamma-glutamyl moieties from glutathione and other gamma-glutamyl compounds to acceptors. The sequence is that of Glutathione hydrolase 6 from Rattus norvegicus (Rat).